Consider the following 941-residue polypeptide: Isoleucine--tRNA ligase (941 aa).

Positions 58-68 (PYANGDIHIGH) match the 'HIGH' region motif. Residue Glu-563 coordinates L-isoleucyl-5'-AMP. Positions 604–608 (KMSKS) match the 'KMSKS' region motif. Lys-607 contributes to the ATP binding site. Cys-904, Cys-907, Cys-924, and Cys-927 together coordinate Zn(2+).

It belongs to the class-I aminoacyl-tRNA synthetase family. IleS type 1 subfamily. In terms of assembly, monomer. It depends on Zn(2+) as a cofactor.

The protein resides in the cytoplasm. It carries out the reaction tRNA(Ile) + L-isoleucine + ATP = L-isoleucyl-tRNA(Ile) + AMP + diphosphate. Its function is as follows. Catalyzes the attachment of isoleucine to tRNA(Ile). As IleRS can inadvertently accommodate and process structurally similar amino acids such as valine, to avoid such errors it has two additional distinct tRNA(Ile)-dependent editing activities. One activity is designated as 'pretransfer' editing and involves the hydrolysis of activated Val-AMP. The other activity is designated 'posttransfer' editing and involves deacylation of mischarged Val-tRNA(Ile). The protein is Isoleucine--tRNA ligase of Halorhodospira halophila (strain DSM 244 / SL1) (Ectothiorhodospira halophila (strain DSM 244 / SL1)).